Consider the following 59-residue polypeptide: Large ribosomal subunit protein uL30 (59 aa).

Belongs to the universal ribosomal protein uL30 family. In terms of assembly, part of the 50S ribosomal subunit.

The sequence is that of Large ribosomal subunit protein uL30 from Geotalea daltonii (strain DSM 22248 / JCM 15807 / FRC-32) (Geobacter daltonii).